A 1626-amino-acid polypeptide reads, in one-letter code: MSESGNTTSMPGCGRMCALRSTWSKRAFLVACKDGALTSDGRCPQYGCGALVSITKGVQQPKKTASAKVVKCLCWVQPARWCEKHSKGPASPNGSVTTKRSNSARAAPAPLPYKKQTCDVVVTVGPLELVYPALVSEELPTPVAATPTKVEEVPIPELPLWLAPAWMVEQPYAATPEVLCLTQREEFALLKKRLTRKGKLLQRRATHARFEARAALARVRAATQRKVEEVTALVIKGRRILAAHQLLRELEEVAPLSQAQEQLVASSCAAAAARQEECASFLRRAKAWRKSISATPPVAFATAVASKVVSATMPWAHLGLSLGGLLAVPTLDGTLGAKQWNAKTIATWVLKPVVSCVQSVHAKVRDWLHSQPEVGVTNTKVPLVLPEVCLGVLSPPSLSEEIVDNPQETSQSGIWHPEMGVRNIYVFHDDSWETSPEEDENYTYTFSRQCGIPYLLVEGRGAEERKNTILGWDFSLHNDGEFEFLPSPEEGYTKELVTPVALEEEDKYSTASSCGFFSLDDVSSAITIQCPGLLSADADVHFFDGPGYRCSSRPRDFRPPVVRGCDYESRVKASIQRKIENPLQERFITVLREKRKKNKKKEFHSFSACFAFKRKQIQWPPTPNEMVNEWEEYCIAQAWLPFEVVVTDEIEDVTPLYPGGRDYNCNSQLLFPLAPLSTVYCDDSCFHPNDGWTTDGNGKHFRLSPQFVLPDVPIPIVHRVTRQLPQFLYDLGIGDLTCNSGYQAENLQEEIQERMEDRSEEKPVPSLDTLISKLSKRSTKVKGAGENRYADRHSLTEKAIFHQPGALSRMRSGKEKTIVAANHNSDQISVRMAECGKPVFTPLPRMSDEMLRKFLEKGLGSTSTVALDIGIQSHIPQGMPTVAFVNVMDTRIEDPLYSSLCGSYIDLGRDRAKTLCLPLVNFPMSKLAEDVDDVLNGLMLCTHFQDSTKFGVGKPAFQYGTLEFQEFKPSAYSDFSRVRDNWDAIAKQQNTPNDRILAGFSVLGAVSQAYNQALPVFKSVELVAPPKRKPVVATFQNPTTLGRSNTTRSFRMPTMDLPRSTGRDAPIPIVHRRNNNDVHGFDEATPARFSTCDSGLVADTTLAFAKMYQCKKDAKAGHVLATIDIQECVFEDNRRVALDWLAHGLASFKYDLQLTVDSNPFVGVTLGITVDAFDRLLPQISDEVIAVPLAFQLPTYLFPISKKGTFTQTIDFAAIAGYNFFPHVAAFGRPKIIVYIVSDNDLPASDTWMCLVELHMTRLESSTLACSPTLVLPQAFGGDLPLDLWRGPYTFPLGGGTKRLSTSLDIGTSTTTVSGWRTVSFPAAYALFLQGHGGSLVGEVVHTGSAAVSCALHLCISFGGAPPTLEEALVFPGFRLPSGEGKFHIKVQTPYGRLSTLTPDCALYVYLAGGPIAVAPMSVPYQFCIHLERLVDDGAPPRTIGLIREFNWATINNFKSDDITFAIPARLSDLVLTCGDVTMSTNPLALLIGSCGFFRGNLTVVLEWATFLKAGDKEGTVQLTTCRGMINNVKGVRNAIQKKVVNLSLVGSVSRYLNVGDFTGFAQSGGQVGYDEIFLEFSTNKAKQIRYLNINVELDENFELYGRTIIPLKNTAPAFASTSASAPNES.

Disordered regions lie at residues 84 to 107 and 1042 to 1066; these read KHSK…ARAA and GRSN…RDAP. A compositionally biased stretch (polar residues) spans 92 to 104; sequence PNGSVTTKRSNSA.

The protein belongs to the nepoviruses RNA2 polyprotein family. Post-translationally, specific enzymatic cleavages in vivo by the P1 encoded 3C-like protease yield mature proteins.

Its subcellular location is the host cell junction. It localises to the host plasmodesma. The protein localises to the virion. Its function is as follows. Implicated in RNA2 replication. Could also be required for nematode transmission of the virus. Transports viral genome to neighboring plant cells directly through plasmosdesmata, without any budding. The movement protein allows efficient cell to cell propagation, by bypassing the host cell wall barrier. Acts by forming a tubular structure at the host plasmodesmata, enlarging it enough to allow free passage of virion capsids. The chain is RNA2 polyprotein from Blackcurrant reversion association virus (BRAV).